The chain runs to 122 residues: Small ribosomal subunit protein uS8c (122 aa).

It belongs to the universal ribosomal protein uS8 family. Part of the 30S ribosomal subunit.

The protein localises to the plastid. It localises to the chloroplast. Its function is as follows. One of the primary rRNA binding proteins, it binds directly to 16S rRNA central domain where it helps coordinate assembly of the platform of the 30S subunit. The protein is Small ribosomal subunit protein uS8c (rps8) of Ostreococcus tauri.